The chain runs to 632 residues: Polyadenylate-binding protein, cytoplasmic and nuclear (632 aa).

A compositionally biased stretch (polar residues) spans M1–E11. The tract at residues M1 to D43 is disordered. Residues A31 to D43 show a composition bias toward low complexity. RRM domains lie at A52–R130, G140–S217, T233–K310, and V336–R413. In terms of domain architecture, PABC spans Q534–N615.

Belongs to the polyadenylate-binding protein type-1 family.

It is found in the cytoplasm. The protein resides in the nucleus. Binds the poly(A) tail of mRNA. Appears to be an important mediator of the multiple roles of the poly(A) tail in mRNA biogenesis, stability and translation. In the nucleus, involved in both mRNA cleavage and polyadenylation. Is also required for efficient mRNA export to the cytoplasm. Acts in concert with a poly(A)-specific nuclease (PAN) to affect poly(A) tail shortening, which may occur concomitantly with either nucleocytoplasmic mRNA transport or translational initiation. In the cytoplasm, stimulates translation initiation and regulates mRNA decay through translation termination-coupled poly(A) shortening, probably mediated by PAN. This Scheffersomyces stipitis (strain ATCC 58785 / CBS 6054 / NBRC 10063 / NRRL Y-11545) (Yeast) protein is Polyadenylate-binding protein, cytoplasmic and nuclear (PAB1).